Reading from the N-terminus, the 304-residue chain is Tyrosine recombinase XerD (304 aa).

The region spanning 6 to 91 is the Core-binding (CB) domain; the sequence is EPWRKTLETF…AIRSFHKFLL (86 aa). Residues 112–298 form the Tyr recombinase domain; that stretch reads YLPSVLTIEE…DRSFIKEVHK (187 aa). Catalysis depends on residues arginine 155, lysine 179, histidine 250, arginine 253, and histidine 276. Tyrosine 285 acts as the O-(3'-phospho-DNA)-tyrosine intermediate in catalysis.

It belongs to the 'phage' integrase family. XerD subfamily. In terms of assembly, forms a cyclic heterotetrameric complex composed of two molecules of XerC and two molecules of XerD.

It localises to the cytoplasm. Its function is as follows. Site-specific tyrosine recombinase, which acts by catalyzing the cutting and rejoining of the recombining DNA molecules. The XerC-XerD complex is essential to convert dimers of the bacterial chromosome into monomers to permit their segregation at cell division. It also contributes to the segregational stability of plasmids. This Chlorobaculum tepidum (strain ATCC 49652 / DSM 12025 / NBRC 103806 / TLS) (Chlorobium tepidum) protein is Tyrosine recombinase XerD.